A 286-amino-acid polypeptide reads, in one-letter code: ATP synthase gamma chain (286 aa).

Belongs to the ATPase gamma chain family. As to quaternary structure, F-type ATPases have 2 components, CF(1) - the catalytic core - and CF(0) - the membrane proton channel. CF(1) has five subunits: alpha(3), beta(3), gamma(1), delta(1), epsilon(1). CF(0) has three main subunits: a, b and c.

It localises to the cell inner membrane. Produces ATP from ADP in the presence of a proton gradient across the membrane. The gamma chain is believed to be important in regulating ATPase activity and the flow of protons through the CF(0) complex. The chain is ATP synthase gamma chain from Shewanella amazonensis (strain ATCC BAA-1098 / SB2B).